The following is a 109-amino-acid chain: Encapsulin nanocompartment cargo protein EncD (109 aa).

Residue E47 participates in Fe cation binding. The tract at residues 61-94 (AGGRGAAAPTPAREAPAEAPRLARGSADELHEAA) is disordered. Positions 66–85 (AAAPTPAREAPAEAPRLARG) are enriched in low complexity. The interval 100 to 106 (LTVGSLR) is probable targeting peptide.

It localises to the encapsulin nanocompartment. Its function is as follows. Cargo protein of a type 1 encapsulin nanocompartment. May help nucleate Fe atoms in the interior of the encapsulin nanocompartment. Present in about 47 copies/encapsulin nanocompartment. In Myxococcus xanthus (strain DK1622), this protein is Encapsulin nanocompartment cargo protein EncD.